The sequence spans 32 residues: Periplasmic [NiFe] hydrogenase small subunit (32 aa).

The [4Fe-4S] cluster site is built by cysteine 17 and cysteine 20.

Belongs to the [NiFe]/[NiFeSe] hydrogenase small subunit family. Heterodimer of a large and a small subunit. The cofactor is [3Fe-4S] cluster. [4Fe-4S] cluster is required as a cofactor.

Its subcellular location is the periplasm. It carries out the reaction 2 Fe(III)-[cytochrome c3] + H2 = 2 Fe(II)-[cytochrome c3] + 2 H(+). This chain is Periplasmic [NiFe] hydrogenase small subunit (hydA), found in Desulfovibrio multispirans.